A 349-amino-acid polypeptide reads, in one-letter code: Protein RecA (349 aa).

71-75 (SSGKT) lines the phosphate pocket. ATP is bound by residues 71 to 76 (SSGKTT) and 102 to 105 (DPEY). Gln-196 is a phosphate binding site.

Belongs to the RecA family. Polymerizes non-specifically on ssDNA to form filaments. Interacts with and activates LexA leading to autocatalytic cleavage of LexA, which derepresses the SOS regulon and activates DNA repair.

It localises to the cytoplasm. Its function is as follows. Required for homologous recombination (HR) and the bypass of mutagenic DNA lesions (double strand breaks, DSB) by the SOS response. Can catalyze the hydrolysis of ATP in the presence of single-stranded DNA, the ATP-dependent uptake of single-stranded DNA by duplex DNA, and the ATP-dependent hybridization of homologous single-stranded DNAs. Numerous X-ray crystals have been resolved under different conditions which indicate the flexibility of the protein, essential to its function. Gln-196 contributes to this plasticity by acting as a switch residue, which transmits the effect of nucleotide binding to the DNA-binding region. In Mycolicibacterium smegmatis (strain ATCC 700084 / mc(2)155) (Mycobacterium smegmatis), this protein is Protein RecA.